The sequence spans 216 residues: Probable nicotinate-nucleotide adenylyltransferase (216 aa).

It belongs to the NadD family.

It catalyses the reaction nicotinate beta-D-ribonucleotide + ATP + H(+) = deamido-NAD(+) + diphosphate. It functions in the pathway cofactor biosynthesis; NAD(+) biosynthesis; deamido-NAD(+) from nicotinate D-ribonucleotide: step 1/1. Functionally, catalyzes the reversible adenylation of nicotinate mononucleotide (NaMN) to nicotinic acid adenine dinucleotide (NaAD). The polypeptide is Probable nicotinate-nucleotide adenylyltransferase (Geotalea daltonii (strain DSM 22248 / JCM 15807 / FRC-32) (Geobacter daltonii)).